The sequence spans 274 residues: Cytochrome b-c1 complex subunit Rieske, mitochondrial (274 aa).

Residues 79 to 103 lie on the Mitochondrial matrix side of the membrane; it reads SHTDIKVPDFSDYRRSEVLDKTKSS. A helical transmembrane segment spans residues 104–140; that stretch reads RESSDARKGFSYLVTAATAVGVTYAAKSIVTQFVSSM. Over 141–274 the chain is Mitochondrial intermembrane; it reads SASADVLAMS…FTGDDMVIVG (134 aa). Residues 187-272 enclose the Rieske domain; the sequence is EAAVELSQLR…YEFTGDDMVI (86 aa). 5 residues coordinate [2Fe-2S] cluster: C217, H219, C236, H239, and S241. C222 and C238 are joined by a disulfide.

It belongs to the Rieske iron-sulfur protein family. Component of the ubiquinol-cytochrome c oxidoreductase (cytochrome b-c1 complex, complex III, CIII), a multisubunit enzyme composed of 11 subunits. The complex is composed of 3 respiratory subunits cytochrome b, cytochrome c1 and Rieske protein UQCRFS1, 2 core protein subunits UQCRC1/QCR1 and UQCRC2/QCR2, and 6 low-molecular weight protein subunits UQCRH/QCR6, UQCRB/QCR7, UQCRQ/QCR8, UQCR10/QCR9, UQCR11/QCR10 and subunit 9, the cleavage product of Rieske protein UQCRFS1. The complex exists as an obligatory dimer and forms supercomplexes (SCs) in the inner mitochondrial membrane with NADH-ubiquinone oxidoreductase (complex I, CI) and cytochrome c oxidase (complex IV, CIV), resulting in different assemblies (supercomplex SCI(1)III(2)IV(1) and megacomplex MCI(2)III(2)IV(2)). Incorporation of the Rieske protein UQCRFS1 is the penultimate step in complex III assembly. Interacts with TTC19, which is involved in the clearance of UQCRFS1 fragments. In terms of assembly, component of the ubiquinol-cytochrome c oxidoreductase (cytochrome b-c1 complex, complex III, CIII). Subunit 9 corresponds to the mitochondrial targeting sequence (MTS) of Rieske protein UQCRFS1. It is retained after processing and incorporated inside complex III, where it remains bound to the complex and localizes between the 2 core subunits UQCRC1/QCR1 and UQCRC2/QCR2. Requires [2Fe-2S] cluster as cofactor. Proteolytic processing is necessary for the correct insertion of UQCRFS1 in the complex III dimer. Several fragments are generated during UQCRFS1 insertion, most probably due to the endogenous matrix-processing peptidase (MPP) activity of the 2 core protein subunits UQCRC1/QCR1 and UQCRC2/QCR2, which are homologous to the 2 mitochondrial-processing peptidase (MPP) subunits beta-MPP and alpha-MPP respectively. The action of the protease is also necessary for the clearance of the UQCRFS1 fragments.

It is found in the mitochondrion inner membrane. It carries out the reaction a quinol + 2 Fe(III)-[cytochrome c](out) = a quinone + 2 Fe(II)-[cytochrome c](out) + 2 H(+)(out). Functionally, component of the ubiquinol-cytochrome c oxidoreductase, a multisubunit transmembrane complex that is part of the mitochondrial electron transport chain which drives oxidative phosphorylation. The respiratory chain contains 3 multisubunit complexes succinate dehydrogenase (complex II, CII), ubiquinol-cytochrome c oxidoreductase (cytochrome b-c1 complex, complex III, CIII) and cytochrome c oxidase (complex IV, CIV), that cooperate to transfer electrons derived from NADH and succinate to molecular oxygen, creating an electrochemical gradient over the inner membrane that drives transmembrane transport and the ATP synthase. The cytochrome b-c1 complex catalyzes electron transfer from ubiquinol to cytochrome c, linking this redox reaction to translocation of protons across the mitochondrial inner membrane, with protons being carried across the membrane as hydrogens on the quinol. In the process called Q cycle, 2 protons are consumed from the matrix, 4 protons are released into the intermembrane space and 2 electrons are passed to cytochrome c. The Rieske protein is a catalytic core subunit containing a [2Fe-2S] iron-sulfur cluster. It cycles between 2 conformational states during catalysis to transfer electrons from the quinol bound in the Q(0) site in cytochrome b to cytochrome c1. Incorporation of UQCRFS1 is the penultimate step in complex III assembly. In terms of biological role, component of the ubiquinol-cytochrome c oxidoreductase (cytochrome b-c1 complex, complex III, CIII). UQCRFS1 undergoes proteolytic processing once it is incorporated in the complex III dimer. One of the fragments, called subunit 9, corresponds to its mitochondrial targeting sequence (MTS). The proteolytic processing is necessary for the correct insertion of UQCRFS1 in the complex III dimer, but the persistence of UQCRFS1-derived fragments may prevent newly imported UQCRFS1 to be processed and assembled into complex III and is detrimental for the complex III structure and function. The polypeptide is Cytochrome b-c1 complex subunit Rieske, mitochondrial (UQCRFS1) (Lagothrix lagotricha (Brown woolly monkey)).